We begin with the raw amino-acid sequence, 148 residues long: Endoribonuclease YbeY (148 aa).

3 residues coordinate Zn(2+): histidine 113, histidine 117, and histidine 123.

This sequence belongs to the endoribonuclease YbeY family. It depends on Zn(2+) as a cofactor.

The protein localises to the cytoplasm. In terms of biological role, single strand-specific metallo-endoribonuclease involved in late-stage 70S ribosome quality control and in maturation of the 3' terminus of the 16S rRNA. In Borrelia turicatae (strain 91E135), this protein is Endoribonuclease YbeY.